A 271-amino-acid chain; its full sequence is Phosphatidylglycerol--prolipoprotein diacylglyceryl transferase (271 aa).

A run of 7 helical transmembrane segments spans residues 25 to 45 (WYGIMYVIALLLALLLAKFFV), 60 to 80 (YFIWVEIGVILGARLGYILIY), 103 to 123 (FVGIRGMSYHGAIIGFLIATL), 134 to 154 (WIFLDLVALSVPLAYVFGRIG), 181 to 201 (PSQLYEAFLEGIVVFIIVYLA), 209 to 229 (GELILVYAGAYSLARFICEFY), and 235 to 255 (GIGFVLWGMSMGQILSFIMFI). Arg152 is an a 1,2-diacyl-sn-glycero-3-phospho-(1'-sn-glycerol) binding site.

It belongs to the Lgt family.

It localises to the cell inner membrane. It carries out the reaction L-cysteinyl-[prolipoprotein] + a 1,2-diacyl-sn-glycero-3-phospho-(1'-sn-glycerol) = an S-1,2-diacyl-sn-glyceryl-L-cysteinyl-[prolipoprotein] + sn-glycerol 1-phosphate + H(+). It functions in the pathway protein modification; lipoprotein biosynthesis (diacylglyceryl transfer). In terms of biological role, catalyzes the transfer of the diacylglyceryl group from phosphatidylglycerol to the sulfhydryl group of the N-terminal cysteine of a prolipoprotein, the first step in the formation of mature lipoproteins. The sequence is that of Phosphatidylglycerol--prolipoprotein diacylglyceryl transferase from Campylobacter jejuni subsp. jejuni serotype O:23/36 (strain 81-176).